The following is a 142-amino-acid chain: PDZ domain-containing protein 11 (142 aa).

The PDZ domain occupies 49–131; the sequence is TIVLKKPPGA…ILMKVRYFPY (83 aa).

The protein localises to the cytoplasm. In Danio rerio (Zebrafish), this protein is PDZ domain-containing protein 11 (pdzd11).